The sequence spans 183 residues: Large ribosomal subunit protein uL5 (183 aa).

This sequence belongs to the universal ribosomal protein uL5 family. As to quaternary structure, part of the 50S ribosomal subunit; part of the 5S rRNA/L5/L18/L25 subcomplex. Contacts the 5S rRNA and the P site tRNA. Forms a bridge to the 30S subunit in the 70S ribosome.

Functionally, this is one of the proteins that bind and probably mediate the attachment of the 5S RNA into the large ribosomal subunit, where it forms part of the central protuberance. In the 70S ribosome it contacts protein S13 of the 30S subunit (bridge B1b), connecting the 2 subunits; this bridge is implicated in subunit movement. Contacts the P site tRNA; the 5S rRNA and some of its associated proteins might help stabilize positioning of ribosome-bound tRNAs. The protein is Large ribosomal subunit protein uL5 of Pseudothermotoga lettingae (strain ATCC BAA-301 / DSM 14385 / NBRC 107922 / TMO) (Thermotoga lettingae).